The following is a 383-amino-acid chain: DNA-directed RNA polymerase subunit alpha (383 aa).

An alpha N-terminal domain (alpha-NTD) region spans residues Met1–Leu240. Residues Ile306–Lys383 form an alpha C-terminal domain (alpha-CTD) region.

It belongs to the RNA polymerase alpha chain family. In terms of assembly, in plastids the minimal PEP RNA polymerase catalytic core is composed of four subunits: alpha, beta, beta', and beta''. When a (nuclear-encoded) sigma factor is associated with the core the holoenzyme is formed, which can initiate transcription.

It localises to the plastid. The protein localises to the chloroplast. The catalysed reaction is RNA(n) + a ribonucleoside 5'-triphosphate = RNA(n+1) + diphosphate. In terms of biological role, DNA-dependent RNA polymerase catalyzes the transcription of DNA into RNA using the four ribonucleoside triphosphates as substrates. The polypeptide is DNA-directed RNA polymerase subunit alpha (Staurastrum punctulatum (Green alga)).